The chain runs to 281 residues: Bifunctional N-acyl-homoserine lactone acylase/prephenate dehydratase (281 aa).

One can recognise a Prephenate dehydratase domain in the interval 6 to 181 (IIAFQGRPGA…NTTRFYIASR (176 aa)). An ACT domain is found at 196–273 (TLLFRVNNQP…EQQEILGVYP (78 aa)). 4 residues coordinate L-phenylalanine: alanine 207, leucine 208, asparagine 221, and methionine 222.

Homodimer.

It catalyses the reaction an N-acyl-L-homoserine lactone + H2O = L-homoserine lactone + a carboxylate. The catalysed reaction is prephenate + H(+) = 3-phenylpyruvate + CO2 + H2O. It functions in the pathway amino-acid biosynthesis; L-phenylalanine biosynthesis; phenylpyruvate from prephenate: step 1/1. Functionally, multifunctional enzyme that acts on N-acyl-homoserine lactones (AHLs), beta-lactam antibiotics and shows prephenate dehydratase activity. Acts as an acylase on AHL and hydrolyzes the amide bond of the acyl side-chain of AHL molecules, releasing homoserine lactone (HSL) and the fatty acid. Can use different 3-oxo-acyl homoserine lactones, such as 3-oxo-decanoyl homoserine lactone, which is the preferred substrate, 3-oxo-octanoyl homoserine lactone, 3-oxo-hexanoyl homoserine lactone and 3-oxo-dodecanoyl homoserine lactone. It can also degrade various beta-lactam antibiotics, including penicillin G, amoxicillin and ampicillin, but not cefotaxime. In addition, it can complement a phenylalanine auxotrophic E.coli mutant, which carries a kanamycin gene inserted into pheA, suggesting that GqqA can also function as a prephenate dehydratase. Involved in bacterial quorum quenching (QQ) and cellulose biofilm formation. This chain is Bifunctional N-acyl-homoserine lactone acylase/prephenate dehydratase, found in Komagataeibacter europaeus (Gluconacetobacter europaeus).